The sequence spans 118 residues: Ribosome-binding factor A (118 aa).

This sequence belongs to the RbfA family. In terms of assembly, monomer. Binds 30S ribosomal subunits, but not 50S ribosomal subunits or 70S ribosomes.

Its subcellular location is the cytoplasm. Its function is as follows. One of several proteins that assist in the late maturation steps of the functional core of the 30S ribosomal subunit. Associates with free 30S ribosomal subunits (but not with 30S subunits that are part of 70S ribosomes or polysomes). Required for efficient processing of 16S rRNA. May interact with the 5'-terminal helix region of 16S rRNA. This is Ribosome-binding factor A from Bacillus anthracis (strain A0248).